The primary structure comprises 262 residues: Type III pantothenate kinase (262 aa).

An ATP-binding site is contributed by 10–17; the sequence is DIGNTTTV. 110 to 113 is a substrate binding site; that stretch reads GADR. The active-site Proton acceptor is D112. D134 lines the K(+) pocket. ATP is bound at residue T137. T189 serves as a coordination point for substrate.

This sequence belongs to the type III pantothenate kinase family. In terms of assembly, homodimer. The cofactor is NH4(+). Requires K(+) as cofactor.

The protein localises to the cytoplasm. The catalysed reaction is (R)-pantothenate + ATP = (R)-4'-phosphopantothenate + ADP + H(+). The protein operates within cofactor biosynthesis; coenzyme A biosynthesis; CoA from (R)-pantothenate: step 1/5. Catalyzes the phosphorylation of pantothenate (Pan), the first step in CoA biosynthesis. The sequence is that of Type III pantothenate kinase from Deinococcus radiodurans (strain ATCC 13939 / DSM 20539 / JCM 16871 / CCUG 27074 / LMG 4051 / NBRC 15346 / NCIMB 9279 / VKM B-1422 / R1).